We begin with the raw amino-acid sequence, 367 residues long: Alginate lyase (367 aa).

The signal sequence occupies residues 1-27 (MKTSHLIRIALPGALAAALLASQVSQA). Residues 65-66 (SK), 138-139 (HT), and Y256 each bind substrate.

The protein belongs to the polysaccharide lyase 5 family.

The protein resides in the periplasm. It catalyses the reaction Eliminative cleavage of alginate to give oligosaccharides with 4-deoxy-alpha-L-erythro-hex-4-enuronosyl groups at their non-reducing ends and beta-D-mannuronate at their reducing end.. Its function is as follows. Catalyzes the depolymerization of alginate by cleaving the beta-1,4 glycosidic bond between two adjacent sugar residues via a beta-elimination mechanism. May serve to degrade mislocalized alginate that is trapped in the periplasmic space. The chain is Alginate lyase from Pseudomonas aeruginosa (strain LESB58).